We begin with the raw amino-acid sequence, 185 residues long: Alcohol dehydrogenase 1 (185 aa).

Residues 10–15 (GLGGVG), Asp-34, Lys-39, 103–105 (VGV), and Arg-180 each bind NAD(+).

The protein belongs to the zinc-containing alcohol dehydrogenase family. Class-I subfamily. In terms of assembly, homodimer. Zn(2+) is required as a cofactor.

The protein localises to the cytoplasm. It catalyses the reaction a primary alcohol + NAD(+) = an aldehyde + NADH + H(+). It carries out the reaction a secondary alcohol + NAD(+) = a ketone + NADH + H(+). The polypeptide is Alcohol dehydrogenase 1 (ADH1) (Anas platyrhynchos (Mallard)).